The chain runs to 178 residues: Thymidine kinase (178 aa).

Position 13-20 (13-20 (GPMFAGKS)) interacts with ATP. Catalysis depends on Glu-85, which acts as the Proton acceptor. Position 115 (Phe-115) interacts with substrate. Zn(2+)-binding residues include Cys-140 and Cys-143. 159-163 (IEVIG) is a binding site for substrate. 2 residues coordinate Zn(2+): Cys-172 and Cys-175.

This sequence belongs to the thymidine kinase family.

It carries out the reaction thymidine + ATP = dTMP + ADP + H(+). The chain is Thymidine kinase (TK) from Oryctolagus cuniculus (Rabbit).